A 747-amino-acid polypeptide reads, in one-letter code: MAPDSGPFPDGQLLKLLPVDPRDRDTQRCRLGPAAFRSLGARLGSPLRISLPAGGCCLCTAWPRRDRVDGFVQLDPQCASPGARVATGRIGMDCLQPVPCPPLRRLEVWPVLRPQAGAPSSAAVLEVVHELLRNRPVSRGHVVTTPPGVPGPVAALHVMGGTPDPEPGGWVTPHTRITLSDKPPPQVEPPGEVTLGGLSETADSLRELLRLPLRYPLALAALGLAVPRGVLLAGPPGVGKTQLVRAVARETGAELLAVSAPALQGSRPGETEENVRRIFQRAQELASRGPSLLFLDEVDALCPRRGGPHRAPESRVVAQVLTLLDGIHRDREFVVVGATNRPDELDPALRRPGRFDREVVIGTPTLKQREAILQVITSKMPISSHIDLGLLAEMTVGYVGADLTALCREAAMCALLKNEKNQDSPKIEETDFLEAFKKIQPSSFRSSTGLMDIKPVGWEQIGGLEDVKLKLKQCVEWPLKFPQEFARMGLTQPKGLLLYGPPGCAKTTLVRALATGCHCSFVSVCGADLFSPFVGDSEKVLSQVFRQARANTPALVFLDEIDSVLGSRSVGTSGCDARERVLSVLLNELDGVGVRTVERRGSKASQQECQEILSRSVMIVVATNRPDVLDDALLRPGRLDKIIYVPPPDQEGRLSILKVCTNNMPVGPDVSLENLAAETCFFSGADLRNLCKEAALFALQENGLEATTVRQEHFTEALKTVKPSLTLKELTFYENLFKKGLSNLEDD.

Met-1 carries the N-acetylmethionine modification. ATP contacts are provided by residues 234 to 241 and 500 to 507; these read GPPGVGKT and GPPGCAKT.

Belongs to the AAA ATPase family. AFG2 subfamily. As to quaternary structure, part of the 55LCC heterohexameric ATPase complex composed at least of AIRIM, AFG2A, AFG2B and CINP. Associates with pre-60S ribosomal particles. As to expression, in adult ear, expressed at low levels in neurosensory hair cells (inner and outer) and supporting cells (pillar and Deiter cells).

It is found in the cytoplasm. The protein localises to the cytoskeleton. The protein resides in the spindle. It localises to the nucleus. It carries out the reaction ATP + H2O = ADP + phosphate + H(+). In the context of 55LCC heterohexameric ATPase complex, the ATPase activity is stimulated by DNA binding and inhibited in presence of RNA. Functionally, ATP-dependent chaperone part of the 55LCC heterohexameric ATPase complex which is chromatin-associated and promotes replisome proteostasis to maintain replication fork progression and genome stability. Required for replication fork progression, sister chromatid cohesion, and chromosome stability. The ATPase activity is specifically enhanced by replication fork DNA and is coupled to cysteine protease-dependent cleavage of replisome substrates in response to replication fork damage. Uses ATPase activity to process replisome substrates in S-phase, facilitating their proteolytic turnover from chromatin to ensure DNA replication and mitotic fidelity. Plays an essential role in the cytoplasmic maturation steps of pre-60S ribosomal particles by promoting the release of shuttling protein RSL24D1/RLP24 from the pre-ribosomal particles. The polypeptide is ATPase family gene 2 protein homolog B (Afg2b) (Mus musculus (Mouse)).